A 455-amino-acid chain; its full sequence is Ribulose bisphosphate carboxylase large chain (455 aa).

At Lys-5 the chain carries N6,N6,N6-trimethyllysine. Residues Asn-114 and Thr-164 each contribute to the substrate site. Lys-166 serves as the catalytic Proton acceptor. Residue Lys-168 coordinates substrate. Mg(2+) contacts are provided by Lys-192, Asp-194, and Glu-195. N6-carboxylysine is present on Lys-192. The Proton acceptor role is filled by His-285. Substrate-binding residues include Arg-286, His-318, and Ser-370.

It belongs to the RuBisCO large chain family. Type I subfamily. Heterohexadecamer of 8 large chains and 8 small chains; disulfide-linked. The disulfide link is formed within the large subunit homodimers. Mg(2+) is required as a cofactor. The disulfide bond which can form in the large chain dimeric partners within the hexadecamer appears to be associated with oxidative stress and protein turnover.

The protein localises to the plastid. The protein resides in the chloroplast. It carries out the reaction 2 (2R)-3-phosphoglycerate + 2 H(+) = D-ribulose 1,5-bisphosphate + CO2 + H2O. It catalyses the reaction D-ribulose 1,5-bisphosphate + O2 = 2-phosphoglycolate + (2R)-3-phosphoglycerate + 2 H(+). Its function is as follows. RuBisCO catalyzes two reactions: the carboxylation of D-ribulose 1,5-bisphosphate, the primary event in carbon dioxide fixation, as well as the oxidative fragmentation of the pentose substrate in the photorespiration process. Both reactions occur simultaneously and in competition at the same active site. This chain is Ribulose bisphosphate carboxylase large chain, found in Vachellia farnesiana (Sweet acacia).